We begin with the raw amino-acid sequence, 230 residues long: Cysteine S-methyltransferase OspZ (230 aa).

The interval 49–52 (GITR) is interaction with host proteins TAB2, TAB3 and ZRANB3. S-adenosyl-L-methionine-binding residues include alanine 92, serine 98, arginine 107, glutamine 111, tyrosine 204, and glutamate 208.

This sequence belongs to the NleE/OspZ family. In terms of assembly, monomer.

It is found in the secreted. The protein resides in the host cytoplasm. The protein localises to the host nucleus. The catalysed reaction is L-cysteinyl-[protein] + S-adenosyl-L-methionine = S-methyl-L-cysteinyl-[protein] + S-adenosyl-L-homocysteine + H(+). Functionally, cysteine methyltransferase effector that inhibits host cell NF-kappa-B activation by preventing nuclear translocation of host protein RELA/p65. Acts by mediating cysteine methylation of host proteins TAB2 and TAB3: methylation of a conserved cysteine residue of the RanBP2-type zinc finger (NZF) of TAB2 and TAB3 disrupts zinc-binding, thereby inactivating the ubiquitin chain-binding activity of TAB2 and TAB3, leading to NF-kappa-B inactivation. Also mediates cysteine methylation of host protein ZRANB3, inactivating its ability to bind ubiquitin chains. This chain is Cysteine S-methyltransferase OspZ, found in Shigella boydii.